The chain runs to 256 residues: Putative bidirectional sugar transporter SWEET7e (256 aa).

Over 1–9 the chain is Extracellular; sequence MVSPDLIRN. Residues 10–30 traverse the membrane as a helical segment; the sequence is VVGIVGNAISFGLFLSPVLTF. Positions 10–97 constitute a MtN3/slv 1 domain; that stretch reads VVGIVGNAIS…TIFFLFSNKK (88 aa). The Cytoplasmic segment spans residues 31-45; the sequence is WRIIKEKDMKYFKAD. Residues 46 to 66 form a helical membrane-spanning segment; it reads PYLATLLNCMLWVFYGLPIVH. Residues 67 to 69 are Extracellular-facing; it reads PNS. Residues 70–90 form a helical membrane-spanning segment; it reads ILVVTINGIGLVIEAVYLTIF. The Cytoplasmic segment spans residues 91 to 100; sequence FLFSNKKNKK. The helical transmembrane segment at 101–121 threads the bilayer; sequence MGVVLATEALFMAAVALGVLL. Residues 122–130 lie on the Extracellular side of the membrane; it reads GAHTHQRRS. A helical transmembrane segment spans residues 131 to 151; that stretch reads LIVGILCVIFGTIMYSSPLTI. Positions 133–212 constitute a MtN3/slv 2 domain; sequence VGILCVIFGT…LMQLILDKNQ (80 aa). The Cytoplasmic segment spans residues 152–164; it reads MSQVVKTKSVEYM. The helical transmembrane segment at 165–185 threads the bilayer; that stretch reads PLLLSVVSFLNGLCWTSYALI. A topological domain (extracellular) is located at residue arginine 186. The chain crosses the membrane as a helical span at residues 187–207; sequence FDIFITIPNGLGVLFTLMQLI. At 208–256 the chain is on the cytoplasmic side; sequence LDKNQDKNLELPTVAPVAKETSIVTPVSKDDDINGSTASHVIINITKEP.

Belongs to the SWEET sugar transporter family. Forms homooligomers and/or heterooligomers.

Its subcellular location is the cell membrane. Its function is as follows. Mediates both low-affinity uptake and efflux of sugar across the plasma membrane. The sequence is that of Putative bidirectional sugar transporter SWEET7e (SWEET7E) from Oryza sativa subsp. japonica (Rice).